The following is a 425-amino-acid chain: MHPASESSHITRLAESIVANTAIVNAYLCEQNLPLPRFDDINAAVRPCTADDASAESARRAVVTASQELRDLLSGPSAPLMVDWTAHSCLRTIVHFRLAEAVSLVPANDIGTSFANIAAQTSLSETHVTRILRHAMTRHIFREPAPGFVAHTAASALLSRDSVTRDVVGLITDEMWPAGLKVPEALARWPNSQEPEETGFSMANAQGSEEQKKSMWSVYEEDAERARRFGVCMSVENSAMPFPLEELEWQGLVVDIGGGVGFNVFNLAEKHQNARFIVEDLSKTVQQGRLLLPKQLKDRVDFVEHDFFSPQPVKDADIYFFRRIFHDWSDKHAVEIIRSLIPALKPGARVRVNELLVPKPGELPREIEKMARNSDFAMLALLNGKERNNEEWQALFRAASDKFRFGFCKTTPPGLMAVIEFVWEP.

S-adenosyl-L-methionine contacts are provided by residues 257 to 258 (GG), Asp-280, 306 to 307 (DF), Arg-322, and Arg-323. His-326 (proton acceptor) is an active-site residue.

The protein belongs to the class I-like SAM-binding methyltransferase superfamily. Cation-independent O-methyltransferase family.

Its pathway is mycotoxin biosynthesis. In terms of biological role, O-methyltransferase; part of the gene clusters that mediate the biosynthesis of AM-toxins, host-selective toxins (HSTs) causing Alternaria blotch on apple, a worldwide distributed disease. AM-toxins are cyclic depsipeptides containing the 3 residues 2-hydroxy-isovaleric acid (2-HIV), dehydroalanine, L-alanine which are common for all 3 AM-toxins I to III. The fourth precursor is L-alpha-amino-methoxyphenyl-valeric acid (L-Amv) for AM-toxin I, L-alpha-amino-phenyl-valeric acid (L-Apv) for AM-toxin II, and L-alpha-amino-hydroxyphenyl-valeric acid (L-Ahv) for AM-toxin III. AM-toxins have two target sites for affecting susceptible apple cells; they cause invagination of the plasma membrane and electrolyte loss and chloroplast disorganization. The non-ribosomal peptide synthetase AMT1 contains 4 catalytic modules and is responsible for activation of each residue in AM-toxin. The aldo-keto reductase AMT2 catalyzes the conversion of 2-keto-isovaleric acid (2-KIV) to 2-hydroxy-isovaleric acid (2-HIV), one of the precursor residues incorporated by AMT1 during AM-toxin biosynthesis, by reduction of its ketone to an alcohol. The cytochrome P450 monooxygenase AMT3 and the thioesterase AMT4 are also important for AM-toxin production, but their exact function within the AM-toxin biosynthesis are not known yet. Up to 21 proteins (including AMT1 to AMT4) are predicted to be involved in AM-toxin biosynthesis since their expression ishighly up-regulated in AM-toxin-producing cultures. The chain is O-methyltransferase AMT9 from Alternaria alternata (Alternaria rot fungus).